The primary structure comprises 372 residues: Uroporphyrinogen decarboxylase (372 aa).

Residues 35–39 (RQAGR), aspartate 85, tyrosine 166, serine 221, and histidine 342 contribute to the substrate site.

This sequence belongs to the uroporphyrinogen decarboxylase family. In terms of assembly, homodimer.

The protein localises to the cytoplasm. It carries out the reaction uroporphyrinogen III + 4 H(+) = coproporphyrinogen III + 4 CO2. It participates in porphyrin-containing compound metabolism; protoporphyrin-IX biosynthesis; coproporphyrinogen-III from 5-aminolevulinate: step 4/4. In terms of biological role, catalyzes the decarboxylation of four acetate groups of uroporphyrinogen-III to yield coproporphyrinogen-III. The chain is Uroporphyrinogen decarboxylase from Methylibium petroleiphilum (strain ATCC BAA-1232 / LMG 22953 / PM1).